We begin with the raw amino-acid sequence, 502 residues long: Lysine--tRNA ligase (502 aa).

Residues glutamate 410 and glutamate 417 each contribute to the Mg(2+) site.

The protein belongs to the class-II aminoacyl-tRNA synthetase family. In terms of assembly, homodimer. Mg(2+) serves as cofactor.

Its subcellular location is the cytoplasm. It carries out the reaction tRNA(Lys) + L-lysine + ATP = L-lysyl-tRNA(Lys) + AMP + diphosphate. This Photobacterium profundum (strain SS9) protein is Lysine--tRNA ligase.